Consider the following 486-residue polypeptide: Shutoff alkaline exonuclease (486 aa).

Belongs to the herpesviridae alkaline nuclease family. In terms of assembly, forms a complex with the DNA polymerase, the DNA polymerase processivity factor, and the major DNA binding protein.

The protein resides in the host nucleus. The protein localises to the host cytoplasm. Its function is as follows. Plays a role in processing non linear or branched viral DNA intermediates in order to promote the production of mature packaged unit-length linear progeny viral DNA molecules. Exhibits endonuclease and exonuclease activities and accepts both double-stranded and single-stranded DNA as substrate. Exonuclease digestion of DNA is in the 5'-&gt; 3' direction and the products are 5'-monophosphate nucleosides. Additionally, forms a recombinase with the major DNA-binding protein, which displays strand exchange activity. Also acts as a cytoplasmic RNA endonuclease that induces degradation of the majority of the cellular messenger RNAs during early lytic infection. The resulting inhibition of cellular protein synthesis serves to ensure maximal viral gene expression and evasion from host immune response. Internally cleaves host mRNAs which are then degraded by the cellular exonuclease XRN1. Bypasses therefore the regulatory steps of deadenylation and decapping normally required for XRN1 activation. In addition, inhibits host inflammasome activation to promote viral lytic replication by interacting with host AIM2 and disrupting its polymerization. The chain is Shutoff alkaline exonuclease (ORF37) from Human herpesvirus 8 type P (isolate GK18) (HHV-8).